Consider the following 325-residue polypeptide: Hexaprenyl-diphosphate synthase large subunit ((2E,6E)-farnesyl-diphosphate specific) (325 aa).

Positions 45, 48, and 77 each coordinate isopentenyl diphosphate. Positions 84, 88, and 93 each coordinate all-trans-hexaprenyl diphosphate. Residues D84 and D88 each coordinate Mg(2+). R94 is a binding site for isopentenyl diphosphate. All-trans-hexaprenyl diphosphate-binding residues include K170, T171, and Q208.

It belongs to the FPP/GGPP synthase family. As to quaternary structure, dimer of heterodimer or heterotetramer composed of a small (Hexs-a) and large (Hexs-B) subunit. Requires Mg(2+) as cofactor.

It carries out the reaction 3 isopentenyl diphosphate + (2E,6E)-farnesyl diphosphate = all-trans-hexaprenyl diphosphate + 3 diphosphate. In terms of biological role, catalyzes the condensation of three molecules of isopentenyl diphosphate with farnesyl diphosphate (FPP) to yield (all-E)-hexaprenyl diphosphate (HexPP; C30), the precursor of the prenyl side chain of menaquinone-6. Large subunit Hexs-B catalyzes the condensation reaction and the final product chain length is cooperatively regulated by both the Hexs-A and Hexs-B subunits using the whole size of the hydrophobic cleft as a ruler. This chain is Hexaprenyl-diphosphate synthase large subunit ((2E,6E)-farnesyl-diphosphate specific) (hexs-b), found in Micrococcus luteus (Micrococcus lysodeikticus).